A 160-amino-acid chain; its full sequence is 3-hydroxyacyl-[acyl-carrier-protein] dehydratase FabZ (160 aa).

His63 is a catalytic residue.

It belongs to the thioester dehydratase family. FabZ subfamily.

It localises to the cytoplasm. It carries out the reaction a (3R)-hydroxyacyl-[ACP] = a (2E)-enoyl-[ACP] + H2O. In terms of biological role, involved in unsaturated fatty acids biosynthesis. Catalyzes the dehydration of short chain beta-hydroxyacyl-ACPs and long chain saturated and unsaturated beta-hydroxyacyl-ACPs. This is 3-hydroxyacyl-[acyl-carrier-protein] dehydratase FabZ from Xylella fastidiosa (strain M12).